Consider the following 344-residue polypeptide: MTKTLTIRRPDDWHLHLRDGAMLRAVLPETTAHFARAIIMPNLVPPVVTFAQAQDYHARILAALPEGAEFTPLMTLYLTEDTDPDDVAAAHANGLVHAVKLYPAGATTNSASGVANFDNIRAVLERMAEIGLPLCVHGEVTDDDIDIFDREAVFIDRVLDPIRQATPGLRVVMEHITTRNAVDYATAQDDTLGATITTHHLVINRNHILAGGIKPHYYCLPVAKREEHRLALRAAATSGDARFFLGTDSAPHTDANKLLPCGCAGCFTATNTMSILAHVFEEEQALERLEGFASLHGPAFYRLPANEARLTLTKTPATFPSHIETEDGPVTVFDPGFVPNWTVV.

H14 and H16 together coordinate Zn(2+). Substrate contacts are provided by residues 16-18 and N42; that span reads HLR. Zn(2+)-binding residues include K100, H137, and H175. Residue K100 is modified to N6-carboxylysine. H137 contacts substrate. L220 contacts substrate. D248 serves as a coordination point for Zn(2+). D248 is a catalytic residue. Positions 252 and 264 each coordinate substrate.

This sequence belongs to the metallo-dependent hydrolases superfamily. DHOase family. Class II DHOase subfamily. As to quaternary structure, homodimer. Zn(2+) serves as cofactor.

It catalyses the reaction (S)-dihydroorotate + H2O = N-carbamoyl-L-aspartate + H(+). The protein operates within pyrimidine metabolism; UMP biosynthesis via de novo pathway; (S)-dihydroorotate from bicarbonate: step 3/3. Functionally, catalyzes the reversible cyclization of carbamoyl aspartate to dihydroorotate. The protein is Dihydroorotase of Roseobacter denitrificans (strain ATCC 33942 / OCh 114) (Erythrobacter sp. (strain OCh 114)).